A 199-amino-acid chain; its full sequence is ATP-dependent Clp protease proteolytic subunit (199 aa).

Serine 97 functions as the Nucleophile in the catalytic mechanism. Histidine 122 is a catalytic residue.

This sequence belongs to the peptidase S14 family. As to quaternary structure, fourteen ClpP subunits assemble into 2 heptameric rings which stack back to back to give a disk-like structure with a central cavity, resembling the structure of eukaryotic proteasomes.

The protein resides in the cytoplasm. The catalysed reaction is Hydrolysis of proteins to small peptides in the presence of ATP and magnesium. alpha-casein is the usual test substrate. In the absence of ATP, only oligopeptides shorter than five residues are hydrolyzed (such as succinyl-Leu-Tyr-|-NHMec, and Leu-Tyr-Leu-|-Tyr-Trp, in which cleavage of the -Tyr-|-Leu- and -Tyr-|-Trp bonds also occurs).. Cleaves peptides in various proteins in a process that requires ATP hydrolysis. Has a chymotrypsin-like activity. Plays a major role in the degradation of misfolded proteins. This Geotalea uraniireducens (strain Rf4) (Geobacter uraniireducens) protein is ATP-dependent Clp protease proteolytic subunit.